The following is a 757-amino-acid chain: Polyribonucleotide nucleotidyltransferase (757 aa).

Residues Asp525 and Asp531 each contribute to the Mg(2+) site. Residues 591–650 (PRVISVNIPVDKIGELIGPKGKTINAIQDETGADISIEEDGTVYIGAVDGPSADAARAQV) form the KH domain. The 73-residue stretch at 662 to 734 (GESFLGTVVK…DRGKLSLAPV (73 aa)) folds into the S1 motif domain. The segment at 737 to 757 (ETADQEGRDAASHGSEAPAEG) is disordered.

The protein belongs to the polyribonucleotide nucleotidyltransferase family. The cofactor is Mg(2+).

The protein resides in the cytoplasm. The catalysed reaction is RNA(n+1) + phosphate = RNA(n) + a ribonucleoside 5'-diphosphate. Its function is as follows. Involved in mRNA degradation. Catalyzes the phosphorolysis of single-stranded polyribonucleotides processively in the 3'- to 5'-direction. This chain is Polyribonucleotide nucleotidyltransferase, found in Clavibacter michiganensis subsp. michiganensis (strain NCPPB 382).